A 246-amino-acid polypeptide reads, in one-letter code: Tyrosine recombinase XerD-like (246 aa).

In terms of domain architecture, Core-binding (CB) spans 1–72; it reads MINDINNFIE…AVNQFLFFLY (72 aa). One can recognise a Tyr recombinase domain in the interval 84-246; sequence QETEKITLAQ…TPITLERYYR (163 aa). Active-site residues include K149 and R212. Y244 acts as the O-(3'-phospho-DNA)-tyrosine intermediate in catalysis.

It belongs to the 'phage' integrase family. XerD-like subfamily.

It localises to the cytoplasm. Functionally, putative tyrosine recombinase. Not involved in the cutting and rejoining of the recombining DNA molecules on dif(SL) site. The sequence is that of Tyrosine recombinase XerD-like from Streptococcus agalactiae serotype V (strain ATCC BAA-611 / 2603 V/R).